Reading from the N-terminus, the 437-residue chain is GTPase Obg (437 aa).

The 159-residue stretch at S2–L160 folds into the Obg domain. An OBG-type G domain is found at A161 to E338. GTP contacts are provided by residues G167 to S174, F192 to V196, D214 to G217, N284 to D287, and S319 to I321. 2 residues coordinate Mg(2+): S174 and T194. An OCT domain is found at G359 to D437.

Belongs to the TRAFAC class OBG-HflX-like GTPase superfamily. OBG GTPase family. Monomer. Mg(2+) is required as a cofactor.

It localises to the cytoplasm. In terms of biological role, an essential GTPase which binds GTP, GDP and possibly (p)ppGpp with moderate affinity, with high nucleotide exchange rates and a fairly low GTP hydrolysis rate. Plays a role in control of the cell cycle, stress response, ribosome biogenesis and in those bacteria that undergo differentiation, in morphogenesis control. This is GTPase Obg from Streptococcus suis (strain 05ZYH33).